We begin with the raw amino-acid sequence, 380 residues long: Histone deacetylase-like amidohydrolase (380 aa).

His144 acts as the Proton donor/acceptor in catalysis. The Zn(2+) site is built by Asp181, His183, and Asp269.

Belongs to the histone deacetylase family. In terms of assembly, homotetramer; dimer of head-to-head dimers. Zn(2+) is required as a cofactor.

Its activity is regulated as follows. Is inhibited by azobenzenes, stilbenes and arylazopyrazoles. In terms of biological role, probable protein deacetylase that catalyzes deacetylation of acetylated lysine residues. In vitro, exhibits high activity against artificial HDAC (histone deacetylase) substrates containing acetylated and trifluoroacetylated lysine residues. Is not able to deacetylate acetylated polyamines. The sequence is that of Histone deacetylase-like amidohydrolase from Pseudomonas aeruginosa (strain ATCC 15692 / DSM 22644 / CIP 104116 / JCM 14847 / LMG 12228 / 1C / PRS 101 / PAO1).